Reading from the N-terminus, the 334-residue chain is Holliday junction branch migration complex subunit RuvB (334 aa).

Residues 1 to 182 (MDERLVSSEA…FGVMSRLEYY (182 aa)) form a large ATPase domain (RuvB-L) region. ATP contacts are provided by residues Leu21, Arg22, Gly63, Lys66, Thr67, Thr68, 129-131 (EDF), Arg172, Tyr182, and Arg219. Thr67 contacts Mg(2+). The interval 183–253 (TQEELADIVT…ISQNALERLQ (71 aa)) is small ATPAse domain (RuvB-S). Positions 256–334 (RLGLDHIDHK…HFQMEAPRYD (79 aa)) are head domain (RuvB-H). DNA-binding residues include Arg311 and Arg316.

Belongs to the RuvB family. Homohexamer. Forms an RuvA(8)-RuvB(12)-Holliday junction (HJ) complex. HJ DNA is sandwiched between 2 RuvA tetramers; dsDNA enters through RuvA and exits via RuvB. An RuvB hexamer assembles on each DNA strand where it exits the tetramer. Each RuvB hexamer is contacted by two RuvA subunits (via domain III) on 2 adjacent RuvB subunits; this complex drives branch migration. In the full resolvosome a probable DNA-RuvA(4)-RuvB(12)-RuvC(2) complex forms which resolves the HJ. Homohexamer which interacts with RecU.

It is found in the cytoplasm. It catalyses the reaction ATP + H2O = ADP + phosphate + H(+). Functionally, the RuvA-RuvB-RuvC complex processes Holliday junction (HJ) DNA during genetic recombination and DNA repair, while the RuvA-RuvB complex plays an important role in the rescue of blocked DNA replication forks via replication fork reversal (RFR). RuvA specifically binds to HJ cruciform DNA, conferring on it an open structure. The RuvB hexamer acts as an ATP-dependent pump, pulling dsDNA into and through the RuvAB complex. RuvB forms 2 homohexamers on either side of HJ DNA bound by 1 or 2 RuvA tetramers; 4 subunits per hexamer contact DNA at a time. Coordinated motions by a converter formed by DNA-disengaged RuvB subunits stimulates ATP hydrolysis and nucleotide exchange. Immobilization of the converter enables RuvB to convert the ATP-contained energy into a lever motion, pulling 2 nucleotides of DNA out of the RuvA tetramer per ATP hydrolyzed, thus driving DNA branch migration. The RuvB motors rotate together with the DNA substrate, which together with the progressing nucleotide cycle form the mechanistic basis for DNA recombination by continuous HJ branch migration. Branch migration allows RuvC to scan DNA until it finds its consensus sequence, where it cleaves and resolves cruciform DNA. This is Holliday junction branch migration complex subunit RuvB from Bacillus subtilis (strain 168).